A 211-amino-acid polypeptide reads, in one-letter code: Thiamine-phosphate synthase (211 aa).

4-amino-2-methyl-5-(diphosphooxymethyl)pyrimidine is bound by residues 37–41 and Asn-69; that span reads QLRIK. Asp-70 and Asp-89 together coordinate Mg(2+). Ser-108 provides a ligand contact to 4-amino-2-methyl-5-(diphosphooxymethyl)pyrimidine. 134-136 lines the 2-[(2R,5Z)-2-carboxy-4-methylthiazol-5(2H)-ylidene]ethyl phosphate pocket; sequence TQT. Lys-137 is a binding site for 4-amino-2-methyl-5-(diphosphooxymethyl)pyrimidine. 2-[(2R,5Z)-2-carboxy-4-methylthiazol-5(2H)-ylidene]ethyl phosphate contacts are provided by residues Gly-166 and 186–187; that span reads VS.

The protein belongs to the thiamine-phosphate synthase family. Mg(2+) serves as cofactor.

It carries out the reaction 2-[(2R,5Z)-2-carboxy-4-methylthiazol-5(2H)-ylidene]ethyl phosphate + 4-amino-2-methyl-5-(diphosphooxymethyl)pyrimidine + 2 H(+) = thiamine phosphate + CO2 + diphosphate. The enzyme catalyses 2-(2-carboxy-4-methylthiazol-5-yl)ethyl phosphate + 4-amino-2-methyl-5-(diphosphooxymethyl)pyrimidine + 2 H(+) = thiamine phosphate + CO2 + diphosphate. The catalysed reaction is 4-methyl-5-(2-phosphooxyethyl)-thiazole + 4-amino-2-methyl-5-(diphosphooxymethyl)pyrimidine + H(+) = thiamine phosphate + diphosphate. It participates in cofactor biosynthesis; thiamine diphosphate biosynthesis; thiamine phosphate from 4-amino-2-methyl-5-diphosphomethylpyrimidine and 4-methyl-5-(2-phosphoethyl)-thiazole: step 1/1. Its function is as follows. Condenses 4-methyl-5-(beta-hydroxyethyl)thiazole monophosphate (THZ-P) and 2-methyl-4-amino-5-hydroxymethyl pyrimidine pyrophosphate (HMP-PP) to form thiamine monophosphate (TMP). The polypeptide is Thiamine-phosphate synthase (Escherichia coli (strain SE11)).